Consider the following 314-residue polypeptide: tRNA pseudouridine synthase B (314 aa).

Residue His43 coordinates substrate. Catalysis depends on Asp48, which acts as the Nucleophile. Tyr76, Tyr179, and Leu200 together coordinate substrate.

It belongs to the pseudouridine synthase TruB family. Type 1 subfamily.

It catalyses the reaction uridine(55) in tRNA = pseudouridine(55) in tRNA. Responsible for synthesis of pseudouridine from uracil-55 in the psi GC loop of transfer RNAs. The protein is tRNA pseudouridine synthase B of Shigella dysenteriae serotype 1 (strain Sd197).